The following is a 62-amino-acid chain: Guanine nucleotide-binding protein subunit gamma (62 aa).

Cysteine methyl ester is present on C59. Residue C59 is the site of S-geranylgeranyl cysteine attachment. Positions 60–62 (SVL) are cleaved as a propeptide — removed in mature form.

Belongs to the G protein gamma family. In terms of assembly, g proteins are composed of 3 units, alpha, beta and gamma. Interacts with gpb-1 and gpb-2.

The protein resides in the cell membrane. In terms of biological role, guanine nucleotide-binding proteins (G proteins) are involved as a modulator or transducer in various transmembrane signaling systems. The beta and gamma chains are required for the GTPase activity, for replacement of GDP by GTP, and for G protein-effector interaction. The chain is Guanine nucleotide-binding protein subunit gamma (gpc-1) from Caenorhabditis briggsae.